Here is a 158-residue protein sequence, read N- to C-terminus: MGRFIFVSFGLLVVFLSLSGTGADFDCIPGWSAYDRYCYQAFSEPKNWEDAESFCEEGVKTSHLVSIESSGEGDFVAQLVAEKIKTSFQYVWIGLRIQNKEQQCRSEWSDASSVNYENLYKQSSKKCYALKKGTELRTWFNVYCGRENPFVCKYTPEC.

The first 23 residues, 1–23 (MGRFIFVSFGLLVVFLSLSGTGA), serve as a signal peptide directing secretion. 3 cysteine pairs are disulfide-bonded: Cys-27–Cys-38, Cys-55–Cys-152, and Cys-127–Cys-144. The 120-residue stretch at 34–153 (YDRYCYQAFS…CGRENPFVCK (120 aa)) folds into the C-type lectin domain.

This sequence belongs to the snaclec family. In terms of assembly, tetramer of heterodimers of alpha and beta subunits (alphabeta)(4); disulfide-linked. As to expression, expressed by the venom gland.

Its subcellular location is the secreted. Its function is as follows. Platelet-agglutinating factor that acts in a vWF-independent manner. Binds specifically to platelet GPIbalpha (GP1BA) to a distinct binding site from that of flavocetin-A. The chain is Snaclec mucrocetin subunit alpha from Protobothrops mucrosquamatus (Taiwan habu).